The primary structure comprises 101 residues: Integration host factor subunit beta (101 aa).

This sequence belongs to the bacterial histone-like protein family. As to quaternary structure, heterodimer of an alpha and a beta chain.

Functionally, this protein is one of the two subunits of integration host factor, a specific DNA-binding protein that functions in genetic recombination as well as in transcriptional and translational control. This is Integration host factor subunit beta from Nitrobacter hamburgensis (strain DSM 10229 / NCIMB 13809 / X14).